The sequence spans 151 residues: MKVILRKDVAALGDAGEVVAVKNGYANNFLIPQGMATRATEGTLRALETEKKQQAKKMELKRKSARDLAARIEQMALKVQAKAGESGKLFGTVTAADIAEVLKAQGVEIDRRKITMEAPVKTLGKYEAEVKLFSDVVVRVSFEVEAEGVEA.

The protein belongs to the bacterial ribosomal protein bL9 family.

Binds to the 23S rRNA. The polypeptide is Large ribosomal subunit protein bL9 (Chlorobium phaeovibrioides (strain DSM 265 / 1930) (Prosthecochloris vibrioformis (strain DSM 265))).